A 300-amino-acid chain; its full sequence is MLKKLITTAVLAMLIFTLAACGTTLAPYDAKKDLGEQINYTITGIDAGAGIMLATQNAIKDYHLDDDNWQLQTSSTAAMTSTLQKAMKDKRPIVVTGWTPHWMFTKFDLKFLDDPKNVYGNAENIHTIVRKGLKEDKPSAYQVLDNFFWTAEDMSEVMLEVNDGVDPEEAAKKWIKNNPDKVAKWTDGVEKVDGDEIKLTYVAWDSEIASTNVVAEALKQVGYKPTIQAMEIQPMWASVATDAADGMVAAWLPNTSGIYYKDYKGKFEDLGPNLKGAKIGLAVPKYMTNINSIEDLKTSK.

Positions 1 to 20 (MLKKLITTAVLAMLIFTLAA) are cleaved as a signal peptide. Residue Cys21 is the site of N-palmitoyl cysteine attachment. Cys21 carries S-diacylglycerol cysteine lipidation.

As to quaternary structure, the complex is composed of two ATP-binding proteins (GbuA), two transmembrane proteins (GbuB) and a solute-binding protein (GbuC).

It is found in the cell membrane. Its activity is regulated as follows. The complex is activated by an osmotic gradient or by low temperature. Functionally, part of the ABC transporter complex GbuABC involved in glycine betaine uptake. Involved, with BetL and OpuC, in osmoprotection and cryoprotection of Listeria. Can also uptake carnitine when carnitine is abundant in the growth medium. In Listeria monocytogenes serotype 1/2a (strain 10403S), this protein is Glycine betaine/carnitine transport binding protein GbuC (gbuC).